We begin with the raw amino-acid sequence, 390 residues long: MSVTIDPRRHDAVLFDTALNSTQALVRQLQQARVGTATFASGGGGHDAAIQALIESADRVGARPGRCVVITADAASVAAARDSGFALVIGVDQAGHRDALPDHGADTVLADLDEVRVRAGDRHMSELPDALQALGRPDGLTVPRPAVFFDFDGTLSEIVDDPDAATPTAGAVAALQQLAAQCPVAILSGRDLADVSQRVGLPGIWYAGSHGFELTAPDGTHHQNEAAAAAIPVLEQAAAQLRDRLGSIPGVMVEHKRFGVATHYRNAARNRVGKIAAVVRAAGQRDGLRVTTGREVIELHPDIDWDKGKTLRWVIDHLPDQRAAPLVPIYLGDDITDEDAFDAVGPNGVAIMVRHNEDGDRATAALFALESPARVAEFTGRLASQLSTLG.

Asp-150 acts as the Nucleophile in catalysis. Positions 150, 152, and 333 each coordinate Mg(2+). 150-152 (DFD) lines the substrate pocket.

This sequence belongs to the trehalose phosphatase family. Requires Mg(2+) as cofactor.

The catalysed reaction is alpha,alpha-trehalose 6-phosphate + H2O = alpha,alpha-trehalose + phosphate. It functions in the pathway glycan biosynthesis; trehalose biosynthesis. Functionally, removes the phosphate from trehalose 6-phosphate to produce free trehalose. This chain is Trehalose-phosphate phosphatase (otsB), found in Mycobacterium ulcerans (strain Agy99).